The following is a 176-amino-acid chain: tRNA (cytidine(56)-2'-O)-methyltransferase (176 aa).

S-adenosyl-L-methionine is bound by residues Leu86 and 111-115; that span reads GAEKV.

This sequence belongs to the aTrm56 family. Homodimer.

Its subcellular location is the cytoplasm. The catalysed reaction is cytidine(56) in tRNA + S-adenosyl-L-methionine = 2'-O-methylcytidine(56) in tRNA + S-adenosyl-L-homocysteine + H(+). Functionally, specifically catalyzes the AdoMet-dependent 2'-O-ribose methylation of cytidine at position 56 in tRNAs. The polypeptide is tRNA (cytidine(56)-2'-O)-methyltransferase (Methanoregula boonei (strain DSM 21154 / JCM 14090 / 6A8)).